A 536-amino-acid chain; its full sequence is Putative UDP-glucuronosyltransferase ugt-47 (536 aa).

Residues 1-21 (MMLQTSTILQLLLFLVGSVSA) form the signal peptide. N-linked (GlcNAc...) asparagine glycosylation is found at N52 and N308. A helical transmembrane segment spans residues 497-517 (IIVPVLFVLLYCLIIPFFKLI).

It belongs to the UDP-glycosyltransferase family.

The protein localises to the membrane. It carries out the reaction glucuronate acceptor + UDP-alpha-D-glucuronate = acceptor beta-D-glucuronoside + UDP + H(+). This chain is Putative UDP-glucuronosyltransferase ugt-47 (ugt-47), found in Caenorhabditis briggsae.